The chain runs to 310 residues: U-megalopygitoxin(8)-Mo15 (310 aa).

An N-terminal signal peptide occupies residues 1-27 (MARFSSKNLTKLFQYLVLSLLSPVAFG).

It belongs to the megalysin family. In terms of processing, contains 3 disulfide bonds. Expressed by the venom apparatus.

It localises to the secreted. Its subcellular location is the target cell membrane. May function as a large pore-forming protein. The chain is U-megalopygitoxin(8)-Mo15 from Megalopyge opercularis (Southern flannel moth).